A 247-amino-acid polypeptide reads, in one-letter code: Sugar fermentation stimulation protein homolog (247 aa).

This sequence belongs to the SfsA family.

The protein is Sugar fermentation stimulation protein homolog of Oleidesulfovibrio alaskensis (strain ATCC BAA-1058 / DSM 17464 / G20) (Desulfovibrio alaskensis).